The chain runs to 488 residues: Probable Xaa-Pro aminopeptidase ATEG_00858 (488 aa).

Mn(2+) is bound by residues D273, D284, E417, and E456.

Belongs to the peptidase M24B family. Mn(2+) serves as cofactor.

It catalyses the reaction Release of any N-terminal amino acid, including proline, that is linked to proline, even from a dipeptide or tripeptide.. Functionally, catalyzes the removal of a penultimate prolyl residue from the N-termini of peptides. This is Probable Xaa-Pro aminopeptidase ATEG_00858 from Aspergillus terreus (strain NIH 2624 / FGSC A1156).